Here is a 47-residue protein sequence, read N- to C-terminus: PhoP/PhoQ regulator MgrB (47 aa).

Residues 6-26 (WVILIIVLIACVILWTQTINV) form a helical membrane-spanning segment.

Belongs to the MgrB family. As to quaternary structure, may form homooligomers. Probably interacts with the periplasmic domain of PhoQ.

It localises to the cell inner membrane. Its function is as follows. PhoP-regulated transcription is redox-sensitive, being activated when the periplasm becomes more reducing. MgrB acts between DsbA/DsbB and PhoP/PhoQ in this pathway. Represses PhoP/PhoQ signaling, possibly by binding to the periplasmic domain of PhoQ, altering its activity and that of downstream effector PhoP. The protein is PhoP/PhoQ regulator MgrB of Enterobacter sp. (strain 638).